Reading from the N-terminus, the 368-residue chain is Glutaminyl-peptide cyclotransferase (368 aa).

The signal sequence occupies residues 1–33 (MARERRDSKAATFFCLAWALCLALPGFPQHVSG). Asn-53 carries N-linked (GlcNAc...) asparagine glycosylation. A disulfide bridge links Cys-143 with Cys-169. A Zn(2+)-binding site is contributed by Asp-164. Glu-207 (proton acceptor) is an active-site residue. Glu-208 contributes to the Zn(2+) binding site. Asp-254 acts as the Proton acceptor in catalysis. The N-linked (GlcNAc...) asparagine glycan is linked to Asn-292. Position 336 (His-336) interacts with Zn(2+). Asn-352 carries N-linked (GlcNAc...) asparagine glycosylation.

The protein belongs to the glutaminyl-peptide cyclotransferase family. As to expression, expressed by the venom gland.

The protein resides in the secreted. It catalyses the reaction N-terminal L-glutaminyl-[peptide] = N-terminal 5-oxo-L-prolyl-[peptide] + NH4(+). Its function is as follows. Responsible for the biosynthesis of pyroglutamyl peptides. Has a bias against acidic and tryptophan residues adjacent to the N-terminal glutaminyl residue and a lack of importance of chain length after the second residue. Also catalyzes N-terminal pyroglutamate formation. In Gloydius blomhoffii (Mamushi), this protein is Glutaminyl-peptide cyclotransferase (QPCT).